The following is a 190-amino-acid chain: Cathelicidin-3 (190 aa).

The N-terminal stretch at 1-29 (METQMASPSLGRCSLWLLLLGLLLPSASA) is a signal peptide. Gln30 carries the post-translational modification Pyrrolidone carboxylic acid. Residues 30 to 130 (QALSYREAVL…DLNCNELQSV (101 aa)) constitute a propeptide that is removed on maturation. Disulfide bonds link Cys85–Cys96 and Cys107–Cys124. Positions 133–151 (LRPRRPRLPRPRPRPRPRP) are enriched in basic residues. A disordered region spans residues 133-190 (LRPRRPRLPRPRPRPRPRPRSLPLPRPQPRRIPRPILLPWRPPRPIPRPQPQPIPRWL). Positions 172 to 190 (WRPPRPIPRPQPQPIPRWL) are enriched in pro residues.

It belongs to the cathelicidin family.

The protein localises to the secreted. Functionally, exerts, in vitro, a potent antimicrobial activity. Probably due to an impairment of the function of the respiratory chain and of energy-dependent activities in the inner membrane of susceptible microorganisms. This chain is Cathelicidin-3 (CATHL3), found in Ovis aries (Sheep).